The chain runs to 134 residues: Protein Turandot E (134 aa).

An N-terminal signal peptide occupies residues 1–38 (MSYNRTLHSTTSILKMNSALQISCLLLVLGCLLGSGHG).

Belongs to the Turandot family.

The protein localises to the secreted. Functionally, a humoral factor that may play a role in stress tolerance. The polypeptide is Protein Turandot E (Drosophila yakuba (Fruit fly)).